Here is a 201-residue protein sequence, read N- to C-terminus: 3-isopropylmalate dehydratase small subunit (201 aa).

The protein belongs to the LeuD family. LeuD type 1 subfamily. Heterodimer of LeuC and LeuD.

It carries out the reaction (2R,3S)-3-isopropylmalate = (2S)-2-isopropylmalate. It functions in the pathway amino-acid biosynthesis; L-leucine biosynthesis; L-leucine from 3-methyl-2-oxobutanoate: step 2/4. Functionally, catalyzes the isomerization between 2-isopropylmalate and 3-isopropylmalate, via the formation of 2-isopropylmaleate. The protein is 3-isopropylmalate dehydratase small subunit of Ruegeria pomeroyi (strain ATCC 700808 / DSM 15171 / DSS-3) (Silicibacter pomeroyi).